We begin with the raw amino-acid sequence, 433 residues long: GPI mannosyltransferase 2 (433 aa).

9 helical membrane-spanning segments follow: residues 4–24 (LVKP…IISL), 109–129 (TAVI…FYLT), 148–165 (ATFT…GFFT), 172–194 (LSFL…IIPY), 204–226 (FYYT…NCIL), 247–267 (ALLF…RQQF), 322–342 (IPNF…TFYF), 354–374 (LIFI…VQII), and 410–430 (GYIY…VFFL).

The protein belongs to the PIGV family.

Its subcellular location is the endoplasmic reticulum membrane. It participates in glycolipid biosynthesis; glycosylphosphatidylinositol-anchor biosynthesis. Mannosyltransferase involved in glycosylphosphatidylinositol-anchor biosynthesis. Transfers the second mannose to the glycosylphosphatidylinositol during GPI precursor assembly. The sequence is that of GPI mannosyltransferase 2 (GPI18) from Candida glabrata (strain ATCC 2001 / BCRC 20586 / JCM 3761 / NBRC 0622 / NRRL Y-65 / CBS 138) (Yeast).